The chain runs to 302 residues: GTPase Era (302 aa).

The Era-type G domain maps to 8–175 (HSGFVAIIGR…LTTLKGQLPE (168 aa)). The tract at residues 16–23 (GRPNVGKS) is G1. 16 to 23 (GRPNVGKS) contributes to the GTP binding site. The tract at residues 42–46 (QTTRN) is G2. The G3 stretch occupies residues 63–66 (DTPG). GTP-binding positions include 63–67 (DTPGI) and 125–128 (NKID). Residues 125–128 (NKID) are G4. Residues 154-156 (ISA) are G5. Residues 206–283 (TRQEVPHSTA…YLELWVKVQE (78 aa)) form the KH type-2 domain.

Belongs to the TRAFAC class TrmE-Era-EngA-EngB-Septin-like GTPase superfamily. Era GTPase family. In terms of assembly, monomer.

It localises to the cytoplasm. Its subcellular location is the cell membrane. In terms of biological role, an essential GTPase that binds both GDP and GTP, with rapid nucleotide exchange. Plays a role in 16S rRNA processing and 30S ribosomal subunit biogenesis and possibly also in cell cycle regulation and energy metabolism. This chain is GTPase Era, found in Lactiplantibacillus plantarum (strain ATCC BAA-793 / NCIMB 8826 / WCFS1) (Lactobacillus plantarum).